The chain runs to 457 residues: MYNCAIILAAGKGKRMKSSMPKVVHKVCGKEMINHVIDNVRKANIKDVNLVIGKGSETVKEHTKDRNVTYSMQEEQLGTGHAVICAEEFLKDKKGTVAIFTGDAPLITNETIQELFEFHNSGKYAATLISSTVQDPTGYGRIIREASGVVKKIVEHKDCNEEELKVNEINSGMYCFDIEVLLNSLENLNNDNSQGEYYLTDVIEIIKKSGEKVGAIVVPYEEIMGVNSRVQLSEAEIVMRKRINHKHMVNGVTFIDCESTYIDVDVEIGNDTIIYPGCVIQGNTTIKEECTLYSNSRICNSVIGSGVIVENSVILESHVGEGTTVGPFAYIRPETKIGKSARIGDFVEIKKSTIGDNTKVSHLTYIGDAEVGSKCNFGCGTVVVNYDGQKKQKTIIGNNAFIGCNTNLISPVKVNDNTYIAAGSTITKEVPEGSLAIARSKQINKEGWLDKKGLLKK.

The tract at residues 1–229 (MYNCAIILAA…YEEIMGVNSR (229 aa)) is pyrophosphorylase. UDP-N-acetyl-alpha-D-glucosamine-binding positions include 8 to 11 (LAAG), K22, Q73, and 78 to 79 (GT). Residue D103 participates in Mg(2+) binding. UDP-N-acetyl-alpha-D-glucosamine contacts are provided by G140, E155, N170, and N227. N227 contributes to the Mg(2+) binding site. The linker stretch occupies residues 230 to 250 (VQLSEAEIVMRKRINHKHMVN). An N-acetyltransferase region spans residues 251–457 (GVTFIDCEST…WLDKKGLLKK (207 aa)). Residues R332 and K350 each coordinate UDP-N-acetyl-alpha-D-glucosamine. Catalysis depends on H362, which acts as the Proton acceptor. 2 residues coordinate UDP-N-acetyl-alpha-D-glucosamine: Y365 and N376. Residues 385–386 (NY), A422, and R439 each bind acetyl-CoA.

It in the N-terminal section; belongs to the N-acetylglucosamine-1-phosphate uridyltransferase family. This sequence in the C-terminal section; belongs to the transferase hexapeptide repeat family. Homotrimer. Requires Mg(2+) as cofactor.

The protein resides in the cytoplasm. It catalyses the reaction alpha-D-glucosamine 1-phosphate + acetyl-CoA = N-acetyl-alpha-D-glucosamine 1-phosphate + CoA + H(+). The catalysed reaction is N-acetyl-alpha-D-glucosamine 1-phosphate + UTP + H(+) = UDP-N-acetyl-alpha-D-glucosamine + diphosphate. Its pathway is nucleotide-sugar biosynthesis; UDP-N-acetyl-alpha-D-glucosamine biosynthesis; N-acetyl-alpha-D-glucosamine 1-phosphate from alpha-D-glucosamine 6-phosphate (route II): step 2/2. It functions in the pathway nucleotide-sugar biosynthesis; UDP-N-acetyl-alpha-D-glucosamine biosynthesis; UDP-N-acetyl-alpha-D-glucosamine from N-acetyl-alpha-D-glucosamine 1-phosphate: step 1/1. The protein operates within bacterial outer membrane biogenesis; LPS lipid A biosynthesis. In terms of biological role, catalyzes the last two sequential reactions in the de novo biosynthetic pathway for UDP-N-acetylglucosamine (UDP-GlcNAc). The C-terminal domain catalyzes the transfer of acetyl group from acetyl coenzyme A to glucosamine-1-phosphate (GlcN-1-P) to produce N-acetylglucosamine-1-phosphate (GlcNAc-1-P), which is converted into UDP-GlcNAc by the transfer of uridine 5-monophosphate (from uridine 5-triphosphate), a reaction catalyzed by the N-terminal domain. The polypeptide is Bifunctional protein GlmU (Clostridium botulinum (strain 657 / Type Ba4)).